A 336-amino-acid polypeptide reads, in one-letter code: MDDDKLLSGDKADDEEASLEKSLRPQTLAQYIGQARVKHELGVYIEAARKREESLDHVLLYGPPGLGKTTLAMVIANEMQVNIRTTSGPAIEKPGDLVALLNELEPGDILFIDEIHRLPKIVEEMLYSAMEDFFVDIVVGQGPTAHPVHFPLPPFTLIGATTRAGMLSAPLRDRFGIVEHMAYYEVADLEDIVKRTADIFQTSIKPSGAHEIARRSRGTPRIANRLFKRIRDFAEVADQDAIDEAIVARSLTYLRVDDAGLDETDNKLLRTMLEYYDGGPVGLATIAANIGEETDTIAEVVEPYLLQIGFLKRTQRGRVVTIKGYQHLGFPYPENK.

Over residues 1 to 11 (MDDDKLLSGDK) the composition is skewed to basic and acidic residues. Positions 1–21 (MDDDKLLSGDKADDEEASLEK) are disordered. Residues 1–184 (MDDDKLLSGD…FGIVEHMAYY (184 aa)) are large ATPase domain (RuvB-L). Residues L23, R24, G65, K68, T69, T70, 131–133 (EDF), R174, Y184, and R221 each bind ATP. T69 lines the Mg(2+) pocket. Residues 185-255 (EVADLEDIVK…IVARSLTYLR (71 aa)) form a small ATPAse domain (RuvB-S) region. Residues 258–336 (DAGLDETDNK…HLGFPYPENK (79 aa)) form a head domain (RuvB-H) region. Positions 313 and 318 each coordinate DNA.

Belongs to the RuvB family. In terms of assembly, homohexamer. Forms an RuvA(8)-RuvB(12)-Holliday junction (HJ) complex. HJ DNA is sandwiched between 2 RuvA tetramers; dsDNA enters through RuvA and exits via RuvB. An RuvB hexamer assembles on each DNA strand where it exits the tetramer. Each RuvB hexamer is contacted by two RuvA subunits (via domain III) on 2 adjacent RuvB subunits; this complex drives branch migration. In the full resolvosome a probable DNA-RuvA(4)-RuvB(12)-RuvC(2) complex forms which resolves the HJ.

The protein resides in the cytoplasm. It carries out the reaction ATP + H2O = ADP + phosphate + H(+). Functionally, the RuvA-RuvB-RuvC complex processes Holliday junction (HJ) DNA during genetic recombination and DNA repair, while the RuvA-RuvB complex plays an important role in the rescue of blocked DNA replication forks via replication fork reversal (RFR). RuvA specifically binds to HJ cruciform DNA, conferring on it an open structure. The RuvB hexamer acts as an ATP-dependent pump, pulling dsDNA into and through the RuvAB complex. RuvB forms 2 homohexamers on either side of HJ DNA bound by 1 or 2 RuvA tetramers; 4 subunits per hexamer contact DNA at a time. Coordinated motions by a converter formed by DNA-disengaged RuvB subunits stimulates ATP hydrolysis and nucleotide exchange. Immobilization of the converter enables RuvB to convert the ATP-contained energy into a lever motion, pulling 2 nucleotides of DNA out of the RuvA tetramer per ATP hydrolyzed, thus driving DNA branch migration. The RuvB motors rotate together with the DNA substrate, which together with the progressing nucleotide cycle form the mechanistic basis for DNA recombination by continuous HJ branch migration. Branch migration allows RuvC to scan DNA until it finds its consensus sequence, where it cleaves and resolves cruciform DNA. The sequence is that of Holliday junction branch migration complex subunit RuvB from Lactiplantibacillus plantarum (strain ATCC BAA-793 / NCIMB 8826 / WCFS1) (Lactobacillus plantarum).